Consider the following 461-residue polypeptide: Asparagine--tRNA ligase (461 aa).

Belongs to the class-II aminoacyl-tRNA synthetase family. In terms of assembly, homodimer.

Its subcellular location is the cytoplasm. The catalysed reaction is tRNA(Asn) + L-asparagine + ATP = L-asparaginyl-tRNA(Asn) + AMP + diphosphate + H(+). The sequence is that of Asparagine--tRNA ligase from Solibacter usitatus (strain Ellin6076).